The following is a 962-amino-acid chain: Splicing regulator ARVCF (962 aa).

Positions 8 to 46 (SAASILASVKEQEARFERLTRALEQERRHVALQLERAQQ) form a coiled coil. The disordered stretch occupies residues 95-122 (TVEEDPGTPTSHVSIVTSEDGTTRRTET). Residues Thr102 and Thr104 each carry the phosphothreonine modification. Positions 102-114 (TPTSHVSIVTSED) are enriched in polar residues. Residue Arg170 is modified to Omega-N-methylarginine. Disordered stretches follow at residues 186–253 (GGGF…LPER) and 266–290 (RSLAADDEGGPELEPDYGTATRRRP). The segment covering 206–217 (RGLGMRPPRAGP) has biased composition (low complexity). Position 267 is a phosphoserine (Ser267). Residues 270–280 (ADDEGGPELEP) are compositionally biased toward acidic residues. Ser332, Ser335, Ser343, and Ser345 each carry phosphoserine. ARM repeat units lie at residues 348-387 (SARKEPRWRDPELPEVLAMLRHPVDPVKANAAAYLQHLCF), 390-429 (EGVKRRVRQLRGLPLLVALLDHPRAEVRRRACGALRNLSY), 433-467 (TDNKAAIRDCGGVPALVRLLRAARDNEVRELVTGT), 468-508 (LWNL…NEDS), 526-565 (LRNVSSDGAEARRRLRECEGLVDALLHALQSAVGRKDTDN), and 575-622 (MRNL…GKKA). Positions 590–614 (DRYQEAEPGPLGSAVGSQRRRRDDA) are disordered. The residue at position 606 (Ser606) is a Phosphoserine. Positions 607–623 (QRRRRDDASCFGGKKAK) match the Nuclear localization signal motif. A Phosphothreonine modification is found at Thr642. ARM repeat units lie at residues 646 to 686 (PKRT…AAGA), 699 to 738 (TYIRATVRKERGLPVLVELLQSETDKVVRAVAIALRNLSL), 739 to 781 (DRRN…AVLN), and 782 to 826 (TIHE…SHVL). Residues 776 to 962 (VVAVLNTIHE…AKPQPVDSWV (187 aa)) form a required for interaction with RNA-binding proteins DDX5, HNRNPH2 and SRSF1 and with mRNAs region. The tract at residues 854 to 962 (ATAKGPKGAL…AKPQPVDSWV (109 aa)) is disordered. Phosphoserine occurs at positions 864 and 871. Phosphothreonine is present on Thr872. A compositionally biased stretch (basic and acidic residues) spans 878 to 887 (KSLEGEKTGS). At Ser915 the chain carries Phosphoserine. Over residues 920–932 (ASEKEPLKLDPSR) the composition is skewed to basic and acidic residues.

It belongs to the beta-catenin family. Component of a ribonucleoprotein complex containing mRNAs and RNA-binding proteins including DDX5, HNRNPH2 and SRSF1 as well as ARVCF. Interacts (via the extreme C-terminus) with FRMPD2 (via the PDZ 2 domain). Interacts with CCDC85B. Found in all the examined tissues including heart, brain, liver and kidney. Found at low level in lung. Expressed in dermal connective tissue, salivary gland duct and in the corneal layer (at protein level). Expressed in arrector pili muscle (at protein level). High levels detected in epithelial cells with lower levels found in fibroblasts and T lymphocytes.

It localises to the cell junction. The protein localises to the adherens junction. The protein resides in the nucleus. Its subcellular location is the cytoplasm. Contributes to the regulation of alternative splicing of pre-mRNAs. The sequence is that of Splicing regulator ARVCF from Homo sapiens (Human).